Reading from the N-terminus, the 815-residue chain is Chromatin assembly factor 1 subunit FAS1 (815 aa).

Disordered regions lie at residues 1 to 39 (MDEVSTVNENENRKTMIEPKKLNKRKREPTAIENLTSEE), 292 to 330 (NNKEKEETESRKRIKKQQDESEKEQKRREKEQAELKKQL), 434 to 477 (KLST…KKSR), 502 to 577 (QVVK…EGVQ), and 791 to 815 (RCLPPSTKPQPAVEDAAERLENENA). Composition is skewed to basic and acidic residues over residues 10 to 21 (NENRKTMIEPKK) and 292 to 328 (NNKEKEETESRKRIKKQQDESEKEQKRREKEQAELKK). Residues 244–336 (EEKLLLKQLE…KKQLQVQKQA (93 aa)) adopt a coiled-coil conformation. 2 stretches are compositionally biased toward acidic residues: residues 516–532 (LDYEVDSDEEWEEEEAG) and 554–576 (DDEDDSEDDFMVPDGYLSEDEGV). Over residues 806 to 815 (AAERLENENA) the composition is skewed to basic and acidic residues.

Belongs to the CHAF1A family. In terms of assembly, component of the chromatin assembly factor 1 (CAF-1) complex, composed of FAS1, FAS2 and MSI1. Interacts with CYP71. Expressed in the shoot apical meristem, young leaf primordia, root tip and first lateral root primordium at the hypocotyl/root junction.

It is found in the nucleus. Its function is as follows. Component of the chromatin assembly factor complex (CAF-1) involved in chromatin assembly following DNA replication and DNA repair. Assembles histone octamers onto replicating DNA in vitro. Required for several aspects of development, including seedling growth and leaf hair differentiation. Plays a critical role in the organization of shoot apical meristem (SAM) and root apical meristem (RAM) during postembryonic development by facilitating stable maintenance of gene expression states. Seems not required to maintain transcriptional repression of heterochromatic genes. Involved in heterologous recombination. May repress endocycle. This chain is Chromatin assembly factor 1 subunit FAS1 (FAS1), found in Arabidopsis thaliana (Mouse-ear cress).